The sequence spans 510 residues: Light-independent protochlorophyllide reductase subunit B (510 aa).

Asp36 contacts [4Fe-4S] cluster. Asp296 functions as the Proton donor in the catalytic mechanism. 431–432 provides a ligand contact to substrate; the sequence is GM.

Belongs to the ChlB/BchB/BchZ family. Protochlorophyllide reductase is composed of three subunits; ChlL, ChlN and ChlB. Forms a heterotetramer of two ChlB and two ChlN subunits. It depends on [4Fe-4S] cluster as a cofactor.

The protein resides in the plastid. Its subcellular location is the chloroplast. It catalyses the reaction chlorophyllide a + oxidized 2[4Fe-4S]-[ferredoxin] + 2 ADP + 2 phosphate = protochlorophyllide a + reduced 2[4Fe-4S]-[ferredoxin] + 2 ATP + 2 H2O. The protein operates within porphyrin-containing compound metabolism; chlorophyll biosynthesis (light-independent). Component of the dark-operative protochlorophyllide reductase (DPOR) that uses Mg-ATP and reduced ferredoxin to reduce ring D of protochlorophyllide (Pchlide) to form chlorophyllide a (Chlide). This reaction is light-independent. The NB-protein (ChlN-ChlB) is the catalytic component of the complex. In Physcomitrium patens (Spreading-leaved earth moss), this protein is Light-independent protochlorophyllide reductase subunit B.